A 333-amino-acid chain; its full sequence is Glycerol-3-phosphate dehydrogenase [NAD(P)+] (333 aa).

NADPH contacts are provided by S10, W11, H31, R32, and K105. Positions 105, 136, and 138 each coordinate sn-glycerol 3-phosphate. Residue A140 coordinates NADPH. 5 residues coordinate sn-glycerol 3-phosphate: K191, D244, S254, R255, and N256. Residue K191 is the Proton acceptor of the active site. R255 lines the NADPH pocket. NADPH is bound by residues I279 and E281.

It belongs to the NAD-dependent glycerol-3-phosphate dehydrogenase family.

The protein localises to the cytoplasm. The enzyme catalyses sn-glycerol 3-phosphate + NAD(+) = dihydroxyacetone phosphate + NADH + H(+). It carries out the reaction sn-glycerol 3-phosphate + NADP(+) = dihydroxyacetone phosphate + NADPH + H(+). It participates in membrane lipid metabolism; glycerophospholipid metabolism. Its function is as follows. Catalyzes the reduction of the glycolytic intermediate dihydroxyacetone phosphate (DHAP) to sn-glycerol 3-phosphate (G3P), the key precursor for phospholipid synthesis. This Chlorobium luteolum (strain DSM 273 / BCRC 81028 / 2530) (Pelodictyon luteolum) protein is Glycerol-3-phosphate dehydrogenase [NAD(P)+].